The primary structure comprises 207 residues: Dephospho-CoA kinase (207 aa).

Residues 5 to 207 (IVGLTGGIAS…AALQTHRIEN (203 aa)) form the DPCK domain. Residue 13–18 (ASGKSA) coordinates ATP.

Belongs to the CoaE family.

The protein resides in the cytoplasm. It carries out the reaction 3'-dephospho-CoA + ATP = ADP + CoA + H(+). It functions in the pathway cofactor biosynthesis; coenzyme A biosynthesis; CoA from (R)-pantothenate: step 5/5. Catalyzes the phosphorylation of the 3'-hydroxyl group of dephosphocoenzyme A to form coenzyme A. The polypeptide is Dephospho-CoA kinase (Xanthomonas campestris pv. campestris (strain ATCC 33913 / DSM 3586 / NCPPB 528 / LMG 568 / P 25)).